A 344-amino-acid chain; its full sequence is Phosphate acyltransferase (344 aa).

This sequence belongs to the PlsX family. In terms of assembly, homodimer. Probably interacts with PlsY.

It localises to the cytoplasm. It catalyses the reaction a fatty acyl-[ACP] + phosphate = an acyl phosphate + holo-[ACP]. It functions in the pathway lipid metabolism; phospholipid metabolism. Functionally, catalyzes the reversible formation of acyl-phosphate (acyl-PO(4)) from acyl-[acyl-carrier-protein] (acyl-ACP). This enzyme utilizes acyl-ACP as fatty acyl donor, but not acyl-CoA. The sequence is that of Phosphate acyltransferase from Thermosynechococcus vestitus (strain NIES-2133 / IAM M-273 / BP-1).